We begin with the raw amino-acid sequence, 75 residues long: Dermaseptin-SP3 (75 aa).

A signal peptide spans M1–C22. Positions E23–R45 are excised as a propeptide. P72 is modified (proline amide). The propeptide occupies E74–Q75.

The protein belongs to the frog skin active peptide (FSAP) family. Dermaseptin subfamily. Expressed by the skin glands.

Its subcellular location is the secreted. It localises to the target cell membrane. In terms of biological role, antimicrobial peptide with activity against Gram-positive and Gram-negative bacteria and fungi. Has been tested against E.coli (MIC=47.50-128 uM), S.aureus (MIC=189.98-512 uM), K.pneumoniae (MIC&gt;189.98 uM) and C.albicans (MIC&gt;189.98 uM). Probably acts by disturbing membrane functions with its alpha-helical amphipathic structure. May penetrate bacterial membranes, but stay at the mammalian membrane surface. Shows a very weak hemolytic activity. This chain is Dermaseptin-SP3, found in Agalychnis spurrelli (Gliding leaf frog).